The chain runs to 343 residues: Twinfilin (343 aa).

2 consecutive ADF-H domains span residues 4–139 and 177–312; these read QTGI…KHKV and GINC…EELH. Residues 314–343 are disordered; it reads RKLNLRPQFSKPKGPPSRGAKRLTKPQAVE.

The protein belongs to the actin-binding proteins ADF family. Twinfilin subfamily. Interacts with G-actin; ADP-actin form.

It is found in the cytoplasm. Its subcellular location is the cytoskeleton. It localises to the cell cortex. In terms of biological role, actin-binding protein involved in motile and morphological processes. Inhibits actin polymerization, likely by sequestering G-actin. This is Twinfilin (twf) from Anopheles gambiae (African malaria mosquito).